Consider the following 367-residue polypeptide: Dual-specificity RNA methyltransferase RlmN (367 aa).

Glu93 acts as the Proton acceptor in catalysis. The region spanning 99-333 is the Radical SAM core domain; it reads EEDRATLCVS…VIVRKTRGDD (235 aa). A disulfide bond links Cys106 and Cys338. The [4Fe-4S] cluster site is built by Cys113, Cys117, and Cys120. S-adenosyl-L-methionine is bound by residues 162–163, Ser194, 216–218, and Asn295; these read GE and SLH. Residue Cys338 is the S-methylcysteine intermediate of the active site.

This sequence belongs to the radical SAM superfamily. RlmN family. [4Fe-4S] cluster serves as cofactor.

Its subcellular location is the cytoplasm. It carries out the reaction adenosine(2503) in 23S rRNA + 2 reduced [2Fe-2S]-[ferredoxin] + 2 S-adenosyl-L-methionine = 2-methyladenosine(2503) in 23S rRNA + 5'-deoxyadenosine + L-methionine + 2 oxidized [2Fe-2S]-[ferredoxin] + S-adenosyl-L-homocysteine. It catalyses the reaction adenosine(37) in tRNA + 2 reduced [2Fe-2S]-[ferredoxin] + 2 S-adenosyl-L-methionine = 2-methyladenosine(37) in tRNA + 5'-deoxyadenosine + L-methionine + 2 oxidized [2Fe-2S]-[ferredoxin] + S-adenosyl-L-homocysteine. In terms of biological role, specifically methylates position 2 of adenine 2503 in 23S rRNA and position 2 of adenine 37 in tRNAs. m2A2503 modification seems to play a crucial role in the proofreading step occurring at the peptidyl transferase center and thus would serve to optimize ribosomal fidelity. This chain is Dual-specificity RNA methyltransferase RlmN, found in Aeromonas hydrophila subsp. hydrophila (strain ATCC 7966 / DSM 30187 / BCRC 13018 / CCUG 14551 / JCM 1027 / KCTC 2358 / NCIMB 9240 / NCTC 8049).